The chain runs to 392 residues: ATP phosphoribosyltransferase regulatory subunit (392 aa).

The protein belongs to the class-II aminoacyl-tRNA synthetase family. HisZ subfamily. In terms of assembly, heteromultimer composed of HisG and HisZ subunits.

The protein resides in the cytoplasm. The protein operates within amino-acid biosynthesis; L-histidine biosynthesis; L-histidine from 5-phospho-alpha-D-ribose 1-diphosphate: step 1/9. Required for the first step of histidine biosynthesis. May allow the feedback regulation of ATP phosphoribosyltransferase activity by histidine. This is ATP phosphoribosyltransferase regulatory subunit from Gloeobacter violaceus (strain ATCC 29082 / PCC 7421).